Reading from the N-terminus, the 401-residue chain is GRIP domain-containing protein C119.12 (401 aa).

Positions 7–296 (NETKLVENEN…TLLIGKLQHE (290 aa)) form a coiled coil. Residues 315–366 (NNAEKIDKQLISNLFVSFLTLPRADTKRFEILQLISSVLDWNDTQREQTGLQ) enclose the GRIP domain.

Its subcellular location is the golgi apparatus lumen. This Schizosaccharomyces pombe (strain 972 / ATCC 24843) (Fission yeast) protein is GRIP domain-containing protein C119.12.